Consider the following 403-residue polypeptide: D-galactonate dehydratase family member RspA (403 aa).

2 residues coordinate substrate: Asn37 and His122. Tyr159 (proton donor/acceptor) is an active-site residue. Asp211 serves as a coordination point for Mg(2+). His213 (proton donor/acceptor) is an active-site residue. Mg(2+)-binding residues include Glu237 and Glu263. Glu263, Arg284, His313, Asp317, and Glu340 together coordinate substrate.

The protein belongs to the mandelate racemase/muconate lactonizing enzyme family. GalD subfamily. Requires Mg(2+) as cofactor.

The catalysed reaction is D-mannonate = 2-dehydro-3-deoxy-D-gluconate + H2O. It catalyses the reaction D-gluconate = 2-dehydro-3-deoxy-D-gluconate + H2O. In terms of biological role, has low dehydratase activity with D-mannonate and D-gluconate, suggesting that these are not physiological substrates and that it has no significant role in the in vivo degradation of these compounds. Has no detectable activity with a panel of 70 other acid sugars (in vitro). This is D-galactonate dehydratase family member RspA (rspA) from Halomonas elongata (strain ATCC 33173 / DSM 2581 / NBRC 15536 / NCIMB 2198 / 1H9).